Consider the following 298-residue polypeptide: Estradiol 17-beta-dehydrogenase 11 (298 aa).

The first 21 residues, 1–21 (MKYLLDLILLLPLLIVFCIES), serve as a signal peptide directing secretion. Residue 40–64 (LITGAGHGIGRLTAYEFAKLNTKLV) participates in NADP(+) binding. Ser172 contacts substrate. Residue Tyr185 is the Proton acceptor of the active site.

The protein belongs to the short-chain dehydrogenases/reductases (SDR) family. 17-beta-HSD 3 subfamily.

It localises to the endoplasmic reticulum. Its subcellular location is the lipid droplet. It catalyses the reaction 17beta-estradiol + NAD(+) = estrone + NADH + H(+). The catalysed reaction is 17beta-estradiol + NADP(+) = estrone + NADPH + H(+). In terms of biological role, can convert androstan-3-alpha,17-beta-diol (3-alpha-diol) to androsterone in vitro, suggesting that it may participate in androgen metabolism during steroidogenesis. May act by metabolizing compounds that stimulate steroid synthesis and/or by generating metabolites that inhibit it. Has no activity toward DHEA (dehydroepiandrosterone), or A-dione (4-androste-3,17-dione), and only a slight activity toward testosterone to A-dione. The protein is Estradiol 17-beta-dehydrogenase 11 (Hsd17b11) of Rattus norvegicus (Rat).